The chain runs to 261 residues: Auxin-responsive protein IAA10 (261 aa).

The disordered stretch occupies residues 1–43; that stretch reads MNGLQEVCSSSGSVMIGLPAEEDENAAHSSEDSSCPDESVSET. An EAR-like (transcriptional repression) motif is present at residues 45-49; it reads LDLAL. The tract at residues 62 to 90 is disordered; the sequence is LSSSSSSLTRESGTKRSADSSPAAASNAT. Low complexity predominate over residues 80–89; that stretch reads DSSPAAASNA. The region spanning 151–253 is the PB1 domain; it reads SMLVKVTMDG…SVTRLRIMKT (103 aa).

It belongs to the Aux/IAA family. Homodimers and heterodimers. As to expression, preferentially expressed in vegetative organs.

It localises to the nucleus. In terms of biological role, aux/IAA proteins are short-lived transcriptional factors that function as repressors of early auxin response genes at low auxin concentrations. Repression is thought to result from the interaction with auxin response factors (ARFs), proteins that bind to the auxin-responsive promoter element (AuxRE). Formation of heterodimers with ARF proteins may alter their ability to modulate early auxin response genes expression. This chain is Auxin-responsive protein IAA10 (IAA10), found in Arabidopsis thaliana (Mouse-ear cress).